A 1794-amino-acid polypeptide reads, in one-letter code: Protein TIC 214 (1794 aa).

Helical transmembrane passes span isoleucine 19 to glycine 39, phenylalanine 68 to leucine 88, proline 91 to histidine 111, valine 133 to leucine 153, valine 176 to isoleucine 196, and isoleucine 227 to isoleucine 247.

Belongs to the TIC214 family. In terms of assembly, part of the Tic complex.

The protein localises to the plastid. Its subcellular location is the chloroplast inner membrane. Functionally, involved in protein precursor import into chloroplasts. May be part of an intermediate translocation complex acting as a protein-conducting channel at the inner envelope. The chain is Protein TIC 214 from Olimarabidopsis pumila (Dwarf rocket).